A 225-amino-acid chain; its full sequence is UPF0758 protein NMB1038 (225 aa).

Positions 102 to 224 (VLSDPDTVAD…VCSFRQLGLM (123 aa)) constitute an MPN domain. Residues His173, His175, and Asp186 each contribute to the Zn(2+) site. A JAMM motif motif is present at residues 173–186 (HNHPGGSPEPSQED).

Belongs to the UPF0758 family.

This Neisseria meningitidis serogroup B (strain ATCC BAA-335 / MC58) protein is UPF0758 protein NMB1038.